Reading from the N-terminus, the 677-residue chain is DNA gyrase subunit B, novobiocin-resistant (677 aa).

Residues 1–23 (MTTYDTRTATDTRGSEQPGHVGT) form a disordered region. A novobiocin-binding region spans residues 154–295 (IWTDGHRWTQ…RLLSAEIALQ (142 aa)). A Toprim domain is found at 456–570 (SEIFIVEGDS…EGHVHLSRPP (115 aa)). Mg(2+) contacts are provided by E462, D535, and D537.

This sequence belongs to the type II topoisomerase GyrB family. Heterotetramer, composed of two GyrA and two GyrB chains. In the heterotetramer, GyrA contains the active site tyrosine that forms a transient covalent intermediate with DNA, while GyrB binds cofactors and catalyzes ATP hydrolysis. Requires Mg(2+) as cofactor. Mn(2+) serves as cofactor. It depends on Ca(2+) as a cofactor.

The protein resides in the cytoplasm. The catalysed reaction is ATP-dependent breakage, passage and rejoining of double-stranded DNA.. A type II topoisomerase that negatively supercoils closed circular double-stranded (ds) DNA in an ATP-dependent manner to modulate DNA topology and maintain chromosomes in an underwound state. Negative supercoiling favors strand separation, and DNA replication, transcription, recombination and repair, all of which involve strand separation. Also able to catalyze the interconversion of other topological isomers of dsDNA rings, including catenanes and knotted rings. Type II topoisomerases break and join 2 DNA strands simultaneously in an ATP-dependent manner. The polypeptide is DNA gyrase subunit B, novobiocin-resistant (Streptomyces niveus (Streptomyces spheroides)).